Reading from the N-terminus, the 418-residue chain is Serine--tRNA ligase (418 aa).

232 to 234 serves as a coordination point for L-serine; the sequence is TAE. ATP contacts are provided by residues 263–265 and valine 279; that span reads RRE. Glutamate 286 serves as a coordination point for L-serine. 350 to 353 lines the ATP pocket; that stretch reads EISS. Serine 385 serves as a coordination point for L-serine.

It belongs to the class-II aminoacyl-tRNA synthetase family. Type-1 seryl-tRNA synthetase subfamily. Homodimer. The tRNA molecule binds across the dimer.

The protein localises to the cytoplasm. The catalysed reaction is tRNA(Ser) + L-serine + ATP = L-seryl-tRNA(Ser) + AMP + diphosphate + H(+). It carries out the reaction tRNA(Sec) + L-serine + ATP = L-seryl-tRNA(Sec) + AMP + diphosphate + H(+). Its pathway is aminoacyl-tRNA biosynthesis; selenocysteinyl-tRNA(Sec) biosynthesis; L-seryl-tRNA(Sec) from L-serine and tRNA(Sec): step 1/1. In terms of biological role, catalyzes the attachment of serine to tRNA(Ser). Is also able to aminoacylate tRNA(Sec) with serine, to form the misacylated tRNA L-seryl-tRNA(Sec), which will be further converted into selenocysteinyl-tRNA(Sec). The polypeptide is Serine--tRNA ligase (Leptospira biflexa serovar Patoc (strain Patoc 1 / Ames)).